A 45-amino-acid chain; its full sequence is MEAALLLAKLPEAYSIFDPLVDVLPLIPLFFLLLAFVWQAAVGFK.

A propeptide spanning residues 1-8 (MEAALLLA) is cleaved from the precursor. A helical membrane pass occupies residues 24-44 (LPLIPLFFLLLAFVWQAAVGF).

Belongs to the PsbK family. PSII is composed of 1 copy each of membrane proteins PsbA, PsbB, PsbC, PsbD, PsbE, PsbF, PsbH, PsbI, PsbJ, PsbK, PsbL, PsbM, PsbT, PsbX, PsbY, PsbZ, Psb30/Ycf12, peripheral proteins PsbO, CyanoQ (PsbQ), PsbU, PsbV and a large number of cofactors. It forms dimeric complexes.

The protein localises to the cellular thylakoid membrane. Its function is as follows. One of the components of the core complex of photosystem II (PSII). PSII is a light-driven water:plastoquinone oxidoreductase that uses light energy to abstract electrons from H(2)O, generating O(2) and a proton gradient subsequently used for ATP formation. It consists of a core antenna complex that captures photons, and an electron transfer chain that converts photonic excitation into a charge separation. This chain is Photosystem II reaction center protein K, found in Picosynechococcus sp. (strain ATCC 27264 / PCC 7002 / PR-6) (Agmenellum quadruplicatum).